A 604-amino-acid polypeptide reads, in one-letter code: Sulfite reductase [NADPH] flavoprotein alpha-component (604 aa).

The region spanning 65-203 (VTILYGSQTG…AAGQWHADVL (139 aa)) is the Flavodoxin-like domain. Residues 71 to 76 (SQTGNG), 118 to 121 (STHG), and 154 to 163 (LGDSSYEFFC) contribute to the FMN site. An FAD-binding FR-type domain is found at 236-453 (QNPYSAEVLV…VEPNKHFRLP (218 aa)). FAD contacts are provided by residues T324, L358, 392-395 (RLYS), 410-412 (TVA), and 425-428 (GGAS). Residues 524–525 (SR), 530–534 (KIYVQ), and D566 each bind NADP(+). Y604 provides a ligand contact to FAD.

It belongs to the NADPH-dependent sulphite reductase flavoprotein subunit CysJ family. This sequence in the N-terminal section; belongs to the flavodoxin family. The protein in the C-terminal section; belongs to the flavoprotein pyridine nucleotide cytochrome reductase family. In terms of assembly, alpha(8)-beta(8). The alpha component is a flavoprotein, the beta component is a hemoprotein. The cofactor is FAD. It depends on FMN as a cofactor.

It catalyses the reaction hydrogen sulfide + 3 NADP(+) + 3 H2O = sulfite + 3 NADPH + 4 H(+). The protein operates within sulfur metabolism; hydrogen sulfide biosynthesis; hydrogen sulfide from sulfite (NADPH route): step 1/1. Component of the sulfite reductase complex that catalyzes the 6-electron reduction of sulfite to sulfide. This is one of several activities required for the biosynthesis of L-cysteine from sulfate. The flavoprotein component catalyzes the electron flow from NADPH -&gt; FAD -&gt; FMN to the hemoprotein component. The sequence is that of Sulfite reductase [NADPH] flavoprotein alpha-component from Shewanella sp. (strain MR-4).